The sequence spans 278 residues: Undecaprenyl-diphosphatase (278 aa).

8 helical membrane-spanning segments follow: residues 3 to 23 (YILIGVILGIVQGISEWIPIS), 42 to 62 (VAYSFGLFMEIGTIAAAIIYF), 88 to 108 (FLVIVTIITGLMGVPLYLFVI), 112 to 132 (ILGLPMTVLGVVLLTDGIIIY), 152 to 172 (IIIVGIAQGLAALPGVSRSGI), 190 to 210 (LSFISLIPAALGAIGVTVLFS), 225 to 245 (GLLISIVVATFVSIFFINALL), and 253 to 273 (VVVLVIILGIIAIISGILSGI).

Belongs to the UppP family.

It is found in the cell membrane. It carries out the reaction di-trans,octa-cis-undecaprenyl diphosphate + H2O = di-trans,octa-cis-undecaprenyl phosphate + phosphate + H(+). In terms of biological role, catalyzes the dephosphorylation of undecaprenyl diphosphate (UPP). The sequence is that of Undecaprenyl-diphosphatase from Saccharolobus islandicus (strain M.14.25 / Kamchatka #1) (Sulfolobus islandicus).